Consider the following 238-residue polypeptide: Aspirochlorine biosynthesis protein N (238 aa).

It belongs to the asaB hydroxylase/desaturase family.

It functions in the pathway mycotoxin biosynthesis. In terms of biological role, part of the gene cluster that mediates the biosynthesis of aspirochlorine (or antibiotic A30641), an unusual halogenated spiro compound with distinctive antifungal properties due to selective inhibition of protein biosynthesis, and which is also active against bacteria, viruses, and murine tumor cells. The non-ribosomal peptide synthetase (NRPS) aclP is responsible the formation of the diketopiperazine (DKP) core from the condensation of 2 phenylalanine residues. One Phe residue is tailored into chlorotyrosine by hydroxylation and chlorination, whereas the second Phe undergoes an unprecedented C-C bond cleavage to be converted into glycine. After formation of the DKP, sulfur is incorporated into the DKP by conjugation with glutathione by aclG, followed by its stepwise degradation to the thiol by aclI, aclJ and aclK, and the dithiol oxidation by aclT. In addition, oxygenases (aclB, aclC, aclL and aclO) and O-methyltransferases (aclM and aclU) act as tailoring enzymes to produce the intermediate dechloroaspirochlorine. Ultimately, chlorination of dechloroaspirochlorine by the halogenase aclH is the last step in the aspirochlorine pathway. The protein is Aspirochlorine biosynthesis protein N of Aspergillus oryzae (strain ATCC 42149 / RIB 40) (Yellow koji mold).